We begin with the raw amino-acid sequence, 30 residues long: Kalata-B5 (30 aa).

Residues 1 to 30 (GTPCGESCVYIPCISGVIGCSCTDKVCYLN) constitute a cross-link (cyclopeptide (Gly-Asn)). Cystine bridges form between Cys4–Cys20, Cys8–Cys22, and Cys13–Cys27.

In terms of processing, this is a cyclic peptide.

Probably participates in a plant defense mechanism. The protein is Kalata-B5 of Oldenlandia affinis.